The chain runs to 230 residues: Germin-like protein 5-1 (230 aa).

The N-terminal stretch at 1 to 20 (MAMVGRSLLLLLLLVTLAAG) is a signal peptide. Cys-38 and Cys-53 form a disulfide bridge. Residues 86-219 (YGFTARSVDI…TLLTDEATVD (134 aa)) enclose the Cupin type-1 domain. Positions 119, 121, 126, and 167 each coordinate Mn(2+). Asn-172 is a glycosylation site (N-linked (GlcNAc...) asparagine).

It belongs to the germin family. Oligomer (believed to be a pentamer but probably hexamer).

It is found in the secreted. The protein localises to the extracellular space. It localises to the apoplast. Its function is as follows. May play a role in plant defense. Probably has no oxalate oxidase activity even if the active site is conserved. The protein is Germin-like protein 5-1 of Oryza sativa subsp. japonica (Rice).